Consider the following 335-residue polypeptide: Methylthioribose-1-phosphate isomerase (335 aa).

Residues 47–49, R81, and Q184 each bind substrate; that span reads RGA. The active-site Proton donor is D225. Residue 235–236 participates in substrate binding; it reads NK.

This sequence belongs to the eIF-2B alpha/beta/delta subunits family. MtnA subfamily.

The enzyme catalyses 5-(methylsulfanyl)-alpha-D-ribose 1-phosphate = 5-(methylsulfanyl)-D-ribulose 1-phosphate. Its pathway is amino-acid biosynthesis; L-methionine biosynthesis via salvage pathway; L-methionine from S-methyl-5-thio-alpha-D-ribose 1-phosphate: step 1/6. Functionally, catalyzes the interconversion of methylthioribose-1-phosphate (MTR-1-P) into methylthioribulose-1-phosphate (MTRu-1-P). In Synechococcus sp. (strain CC9902), this protein is Methylthioribose-1-phosphate isomerase.